Here is a 278-residue protein sequence, read N- to C-terminus: Tropomyosin A (278 aa).

A coiled-coil region spans residues 1-270 (IMMAMKLEKE…YRAISGELDT (270 aa)). Positions 92–134 (DFEQSSGRLTETSTKLDDASKAAEESERNRKTLETRSISDDER) are disordered. The span at 95-104 (QSSGRLTETS) shows a compositional bias: polar residues. Residues 105–134 (TKLDDASKAAEESERNRKTLETRSISDDER) show a composition bias toward basic and acidic residues.

The protein belongs to the tropomyosin family. As to quaternary structure, homodimer.

In terms of biological role, tropomyosin, in association with the troponin complex, plays a central role in the calcium dependent regulation of muscle contraction. This is Tropomyosin A from Echinococcus granulosus (Hydatid tapeworm).